Here is a 160-residue protein sequence, read N- to C-terminus: Phosphopantetheine adenylyltransferase (160 aa).

Serine 10 serves as a coordination point for substrate. ATP contacts are provided by residues 10–11 (SF) and histidine 18. Substrate-binding residues include lysine 42, threonine 74, and arginine 88. Residues 89-91 (GLR), glutamate 99, and 124-130 (YSFISST) contribute to the ATP site.

The protein belongs to the bacterial CoaD family. In terms of assembly, homohexamer. It depends on Mg(2+) as a cofactor.

The protein resides in the cytoplasm. The catalysed reaction is (R)-4'-phosphopantetheine + ATP + H(+) = 3'-dephospho-CoA + diphosphate. It functions in the pathway cofactor biosynthesis; coenzyme A biosynthesis; CoA from (R)-pantothenate: step 4/5. Functionally, reversibly transfers an adenylyl group from ATP to 4'-phosphopantetheine, yielding dephospho-CoA (dPCoA) and pyrophosphate. The protein is Phosphopantetheine adenylyltransferase of Leptospira borgpetersenii serovar Hardjo-bovis (strain L550).